Consider the following 255-residue polypeptide: Triosephosphate isomerase (255 aa).

9-11 (NWK) serves as a coordination point for substrate. The active-site Electrophile is histidine 95. The Proton acceptor role is filled by glutamate 167. Residues glycine 173, serine 212, and 233 to 234 (GG) each bind substrate.

It belongs to the triosephosphate isomerase family. As to quaternary structure, homodimer.

The protein resides in the cytoplasm. It catalyses the reaction D-glyceraldehyde 3-phosphate = dihydroxyacetone phosphate. It functions in the pathway carbohydrate biosynthesis; gluconeogenesis. The protein operates within carbohydrate degradation; glycolysis; D-glyceraldehyde 3-phosphate from glycerone phosphate: step 1/1. Functionally, involved in the gluconeogenesis. Catalyzes stereospecifically the conversion of dihydroxyacetone phosphate (DHAP) to D-glyceraldehyde-3-phosphate (G3P). This Serratia proteamaculans (strain 568) protein is Triosephosphate isomerase.